A 331-amino-acid chain; its full sequence is ADP-L-glycero-D-manno-heptose-6-epimerase (331 aa).

NADP(+)-binding positions include 11–12, 32–33, lysine 39, lysine 54, 75–79, and asparagine 92; these read FI, DN, and LGACT. Catalysis depends on tyrosine 139, which acts as the Proton acceptor. Lysine 143 lines the NADP(+) pocket. A substrate-binding site is contributed by asparagine 168. NADP(+) is bound by residues valine 169 and lysine 177. The active-site Proton acceptor is lysine 177. Substrate-binding positions include arginine 179, glutamine 186, 200 to 203, histidine 213, and tyrosine 292; that span reads FGEH.

Belongs to the NAD(P)-dependent epimerase/dehydratase family. HldD subfamily. As to quaternary structure, homopentamer. Requires NADP(+) as cofactor.

It carries out the reaction ADP-D-glycero-beta-D-manno-heptose = ADP-L-glycero-beta-D-manno-heptose. The protein operates within nucleotide-sugar biosynthesis; ADP-L-glycero-beta-D-manno-heptose biosynthesis; ADP-L-glycero-beta-D-manno-heptose from D-glycero-beta-D-manno-heptose 7-phosphate: step 4/4. Its function is as follows. Catalyzes the interconversion between ADP-D-glycero-beta-D-manno-heptose and ADP-L-glycero-beta-D-manno-heptose via an epimerization at carbon 6 of the heptose. The protein is ADP-L-glycero-D-manno-heptose-6-epimerase of Cupriavidus pinatubonensis (strain JMP 134 / LMG 1197) (Cupriavidus necator (strain JMP 134)).